The sequence spans 203 residues: Phosphatidylethanolamine N-methyltransferase (203 aa).

The catalysed reaction is a 1,2-diacyl-sn-glycero-3-phosphoethanolamine + S-adenosyl-L-methionine = a 1,2-diacyl-sn-glycero-3-phospho-N-methylethanolamine + S-adenosyl-L-homocysteine + H(+). The protein operates within phospholipid metabolism; phosphatidylcholine biosynthesis. This enzyme catalyzes three distinct methylation reactions for converting phosphatidylethanolamine to phosphatidylcholine. This Cereibacter sphaeroides (Rhodobacter sphaeroides) protein is Phosphatidylethanolamine N-methyltransferase (pmtA).